Reading from the N-terminus, the 199-residue chain is MESGGPTYRIENIVATVNLGVELDLEKLAERLAMAEYNPDQFPGLILRLTKPRISALIFRTGKMVCTGAKNEEDLKNAVRALVKLLRDHGAEVPFDPEVQVQNIVASGNLHAEVDLEQAVLMLENAMYEPEQFPGLIYRMSSPRVVMLIFGSGKIVCTGAKSERDVATAVQKLYNQLKDLGVLYIEEGGGEEEEELEEL.

A run of 2 repeats spans residues 10–86 (IENI…VKLL) and 101–177 (VQNI…YNQL).

This sequence belongs to the TBP family.

In terms of biological role, general factor that plays a role in the activation of archaeal genes transcribed by RNA polymerase. Binds specifically to the TATA box promoter element which lies close to the position of transcription initiation. The chain is TATA-box-binding protein from Pyrobaculum islandicum (strain DSM 4184 / JCM 9189 / GEO3).